The sequence spans 60 residues: Cytotoxin 2 (60 aa).

Intrachain disulfides connect C3-C21, C14-C38, C42-C53, and C54-C59.

It belongs to the three-finger toxin family. Short-chain subfamily. Type IA cytotoxin sub-subfamily. In terms of assembly, monomer in solution; Homodimer and oligomer in the presence of negatively charged lipids forming a pore with a size ranging between 20 and 30 Angstroms. Expressed by the venom gland.

The protein localises to the secreted. The protein resides in the target cell membrane. Shows cytolytic activity on many different cells by forming pore in lipid membranes. In vivo, increases heart rate or kills the animal by cardiac arrest. In addition, it binds to heparin with high affinity, interacts with Kv channel-interacting protein 1 (KCNIP1) in a calcium-independent manner, and binds to integrin alpha-V/beta-3 (ITGAV/ITGB3) with moderate affinity. This is Cytotoxin 2 from Naja mossambica (Mozambique spitting cobra).